The primary structure comprises 182 residues: Ribosome maturation factor RimP (182 aa).

This sequence belongs to the RimP family.

The protein localises to the cytoplasm. Its function is as follows. Required for maturation of 30S ribosomal subunits. The polypeptide is Ribosome maturation factor RimP (Chloroherpeton thalassium (strain ATCC 35110 / GB-78)).